Reading from the N-terminus, the 645-residue chain is Rab11 family-interacting protein 1 (645 aa).

One can recognise a C2 domain in the interval 1-128 (MSLAASAGRG…DQGRRKKQWY (128 aa)). Over residues 171–187 (PFGKLKDKIKGKNKDSA) the composition is skewed to basic and acidic residues. A disordered region spans residues 171–215 (PFGKLKDKIKGKNKDSASDTASAIVPSVTPSVDSDDESFSKDKKK). A phosphoserine mark is found at serine 186, serine 204, serine 208, and serine 236. A disordered region spans residues 259-296 (WDDDAHEDESSSASDVMSHKRTSSTDQQPNQSNFSLPK). Over residues 282-293 (STDQQPNQSNFS) the composition is skewed to polar residues. A phosphoserine mark is found at serine 301, serine 316, serine 340, serine 342, serine 344, serine 346, serine 357, serine 358, and serine 383. A disordered region spans residues 330–545 (PEARSEIRES…PRPHPVKPMN (216 aa)). 2 stretches are compositionally biased toward basic and acidic residues: residues 378-391 (SDRR…KDSM) and 418-432 (AARE…ESKK). Phosphoserine is present on serine 434. Residues 459–487 (SEKEKERKGALVEAQLREEDLMRRPEKDA) show a composition bias toward basic and acidic residues. The 63-residue stretch at 573-635 (KKYQPSDPAF…EETPNILRVP (63 aa)) folds into the FIP-RBD domain. The segment at 581 to 645 (AFAYAQLTHD…AQMGKKAGKM (65 aa)) is necessary for interaction with RAB4A and RAB11A, subcellular location and endosomal recycling.

As to quaternary structure, homooligomer. Interacts with RAB11A, RAB11B, RAB25, RAB4A and RAB14.

The protein localises to the recycling endosome. The protein resides in the cytoplasmic vesicle. In terms of biological role, a Rab11 effector protein involved in the endosomal recycling process. Also involved in controlling membrane trafficking along the phagocytic pathway and in phagocytosis. Interaction with RAB14 may function in the process of neurite formation. This Mus musculus (Mouse) protein is Rab11 family-interacting protein 1 (Rab11fip1).